The primary structure comprises 339 residues: Protein-glutamate methylesterase/protein-glutamine glutaminase 3 (339 aa).

Positions 2–119 (NIGIVNDLPL…GLSTDASPQA (118 aa)) constitute a Response regulatory domain. D53 is subject to 4-aspartylphosphate. The CheB-type methylesterase domain maps to 141–336 (PGPAPTRGQP…PQLIARIALT (196 aa)). Residues S158, H185, and D278 contribute to the active site.

This sequence belongs to the CheB family. In terms of processing, phosphorylated by CheA. Phosphorylation of the N-terminal regulatory domain activates the methylesterase activity.

The protein resides in the cytoplasm. It catalyses the reaction [protein]-L-glutamate 5-O-methyl ester + H2O = L-glutamyl-[protein] + methanol + H(+). It carries out the reaction L-glutaminyl-[protein] + H2O = L-glutamyl-[protein] + NH4(+). Involved in chemotaxis. Part of a chemotaxis signal transduction system that modulates chemotaxis in response to various stimuli. Catalyzes the demethylation of specific methylglutamate residues introduced into the chemoreceptors (methyl-accepting chemotaxis proteins or MCP) by CheR. Also mediates the irreversible deamidation of specific glutamine residues to glutamic acid. The sequence is that of Protein-glutamate methylesterase/protein-glutamine glutaminase 3 from Burkholderia orbicola (strain AU 1054).